A 173-amino-acid chain; its full sequence is UPF0598 protein F59C6.12 (173 aa).

This sequence belongs to the UPF0598 family.

This chain is UPF0598 protein F59C6.12, found in Caenorhabditis elegans.